The sequence spans 269 residues: Shikimate dehydrogenase (NADP(+)) (269 aa).

Shikimate is bound by residues 17 to 19 and Thr-64; that span reads SKS. Lys-68 serves as the catalytic Proton acceptor. Glu-80 contributes to the NADP(+) binding site. Shikimate is bound by residues Asn-89 and Asp-105. NADP(+)-binding positions include 130–134, 154–159, and Met-213; these read GAGGA and NRTHAK. Residue Tyr-215 coordinates shikimate. Residue Gly-237 coordinates NADP(+).

Belongs to the shikimate dehydrogenase family. In terms of assembly, homodimer.

The enzyme catalyses shikimate + NADP(+) = 3-dehydroshikimate + NADPH + H(+). It functions in the pathway metabolic intermediate biosynthesis; chorismate biosynthesis; chorismate from D-erythrose 4-phosphate and phosphoenolpyruvate: step 4/7. Involved in the biosynthesis of the chorismate, which leads to the biosynthesis of aromatic amino acids. Catalyzes the reversible NADPH linked reduction of 3-dehydroshikimate (DHSA) to yield shikimate (SA). This is Shikimate dehydrogenase (NADP(+)) from Neisseria pharyngis.